Reading from the N-terminus, the 469-residue chain is MDYLPIFTDLKRRPCLVVGGGDVAWRKARMLLKAGADVRVIAPVLNQAFQQAIEQQQVSHVADEFESSHLDGIFLAIAATDRKAVNALVYQSANQRQVLVNVVDDTQRCSFIIPSIIDRSPIIVAVSSSGKAPVLARLIREKLEALLPQHLGRMATIAGNFRARLAKTVTSFSARRQFWEQVFDGRFSDLVACGQEQDAKQELINLTQSTSPQGQVALIGSGPGDAGLLTLRALQLMQQADVVLYDYLVSDEVMDLVRRDAELVCVGKKAGFHSVPQEETNQLIVKYAQQGKRVVRLKGGDPFVFGRGGEELEVLFDANILFQVVPGITAAAGATAYAGIPLTHRDYAQTAMFVTGHLKAESDQMDWSTLARGKQTLVIYMGLMKSGHIQQQLLINGRAGDTPIAIIERGTQKKQKVIKGQLSELEQLAKNAESPSLIVIGEVVNLSEKLHWFGKQEQSLQQSAVVKLA.

The interval 1-203 (MDYLPIFTDL…GQEQDAKQEL (203 aa)) is precorrin-2 dehydrogenase /sirohydrochlorin ferrochelatase. NAD(+) contacts are provided by residues 22–23 (DV) and 43–44 (PV). Ser128 is subject to Phosphoserine. The uroporphyrinogen-III C-methyltransferase stretch occupies residues 214-469 (GQVALIGSGP…LQQSAVVKLA (256 aa)). Position 223 (Pro223) interacts with S-adenosyl-L-methionine. Catalysis depends on Asp246, which acts as the Proton acceptor. Lys268 (proton donor) is an active-site residue. S-adenosyl-L-methionine is bound by residues 299-301 (GGD), Val304, 329-330 (TA), Met381, and Gly410.

In the N-terminal section; belongs to the precorrin-2 dehydrogenase / sirohydrochlorin ferrochelatase family. This sequence in the C-terminal section; belongs to the precorrin methyltransferase family.

The catalysed reaction is uroporphyrinogen III + 2 S-adenosyl-L-methionine = precorrin-2 + 2 S-adenosyl-L-homocysteine + H(+). It carries out the reaction precorrin-2 + NAD(+) = sirohydrochlorin + NADH + 2 H(+). It catalyses the reaction siroheme + 2 H(+) = sirohydrochlorin + Fe(2+). The protein operates within cofactor biosynthesis; adenosylcobalamin biosynthesis; precorrin-2 from uroporphyrinogen III: step 1/1. It functions in the pathway cofactor biosynthesis; adenosylcobalamin biosynthesis; sirohydrochlorin from precorrin-2: step 1/1. It participates in porphyrin-containing compound metabolism; siroheme biosynthesis; precorrin-2 from uroporphyrinogen III: step 1/1. Its pathway is porphyrin-containing compound metabolism; siroheme biosynthesis; siroheme from sirohydrochlorin: step 1/1. The protein operates within porphyrin-containing compound metabolism; siroheme biosynthesis; sirohydrochlorin from precorrin-2: step 1/1. Multifunctional enzyme that catalyzes the SAM-dependent methylations of uroporphyrinogen III at position C-2 and C-7 to form precorrin-2 via precorrin-1. Then it catalyzes the NAD-dependent ring dehydrogenation of precorrin-2 to yield sirohydrochlorin. Finally, it catalyzes the ferrochelation of sirohydrochlorin to yield siroheme. The chain is Siroheme synthase from Photobacterium profundum (strain SS9).